The following is a 461-amino-acid chain: Elongation factor 1-alpha (461 aa).

G2 carries the post-translational modification N,N,N-trimethylglycine. N6,N6-dimethyllysine; alternate is present on K3. K3 is modified (N6-methyllysine; alternate). Residues 6–241 (KTHINVVVIG…DSIEPPKRPT (236 aa)) enclose the tr-type G domain. The G1 stretch occupies residues 15–22 (GHVDSGKS). Position 15–22 (15–22 (GHVDSGKS)) interacts with GTP. The residue at position 31 (K31) is an N6-methyllysine. Residues 71–75 (GITID) are G2. K80 bears the N6,N6,N6-trimethyllysine mark. The tract at residues 92–95 (DAPG) is G3. Residues 92–96 (DAPGH) and 154–157 (NKMD) each bind GTP. Residues 154–157 (NKMD) are G4. A G5 region spans residues 193–195 (SGF). Position 317 is an N6,N6-dimethyllysine; alternate (K317). K317 is modified (N6-methyllysine; alternate). An N6-methyllysine modification is found at K391.

Belongs to the TRAFAC class translation factor GTPase superfamily. Classic translation factor GTPase family. EF-Tu/EF-1A subfamily.

The protein localises to the cytoplasm. Functionally, this protein promotes the GTP-dependent binding of aminoacyl-tRNA to the A-site of ribosomes during protein biosynthesis. This Pseudoechria curvicolla (Podospora curvicolla) protein is Elongation factor 1-alpha (TEF).